The primary structure comprises 678 residues: Glycine--tRNA ligase beta subunit (678 aa).

Belongs to the class-II aminoacyl-tRNA synthetase family. In terms of assembly, tetramer of two alpha and two beta subunits.

It is found in the cytoplasm. It carries out the reaction tRNA(Gly) + glycine + ATP = glycyl-tRNA(Gly) + AMP + diphosphate. The chain is Glycine--tRNA ligase beta subunit from Streptococcus pneumoniae (strain Hungary19A-6).